The chain runs to 69 residues: Large ribosomal subunit protein bL31 (69 aa).

Residues C17, C19, C37, and C40 each coordinate Zn(2+).

The protein belongs to the bacterial ribosomal protein bL31 family. Type A subfamily. Part of the 50S ribosomal subunit. Zn(2+) serves as cofactor.

Binds the 23S rRNA. This is Large ribosomal subunit protein bL31 from Clostridium novyi (strain NT).